Consider the following 271-residue polypeptide: uncharacterized protein (271 aa).

It belongs to the HAD-like hydrolase superfamily.

This is an uncharacterized protein from Staphylococcus aureus (strain Mu50 / ATCC 700699).